The primary structure comprises 228 residues: Transcription factor zip-11 (228 aa).

A basic motif region spans residues 166–202 (RKRQQNKVAAARYRDKQKAKWQDLLDQLEAEEDRNQR). Positions 166–224 (RKRQQNKVAAARYRDKQKAKWQDLLDQLEAEEDRNQRLKLQAGHLEKEVAEMRQAFLAK) constitute a bZIP domain. The segment at 203–210 (LKLQAGHL) is leucine-zipper.

The protein belongs to the bZIP family. In terms of assembly, interacts with CCAAT/enhancer-binding protein cebp-2.

Its subcellular location is the nucleus. Functionally, transcription factor. Involved in modulating innate immune response pathways, acting to promote resistance against infection by Gram-negative bacterium P.aeruginosa strain PA14. May act as part of a feedback regulatory loop with the pmk-1/p38 MAPK pathway. May also function in concert with CCAAT/enhancer-binding protein cebp-2 to mediate immune responses, independently of the pmk-1/p38 MAPK pathway. This Caenorhabditis elegans protein is Transcription factor zip-11.